The chain runs to 535 residues: CTP synthase (535 aa).

Residues 1-268 (MKTKYIFVTG…DSLVCKKLEL (268 aa)) form an amidoligase domain region. CTP is bound at residue Ser-14. Ser-14 contributes to the UTP binding site. Position 15–20 (15–20 (SLGKGI)) interacts with ATP. Tyr-55 provides a ligand contact to L-glutamine. Position 72 (Asp-72) interacts with ATP. Residues Asp-72 and Glu-142 each contribute to the Mg(2+) site. CTP contacts are provided by residues 149–151 (DIE), 189–194 (KTKPTQ), and Lys-225. UTP-binding positions include 189 to 194 (KTKPTQ) and Lys-225. The 243-residue stretch at 293–535 (TIGLVGKYVE…IKVACTVKEK (243 aa)) folds into the Glutamine amidotransferase type-1 domain. Gly-355 lines the L-glutamine pocket. Cys-382 (nucleophile; for glutamine hydrolysis) is an active-site residue. L-glutamine is bound by residues 383–386 (LGMQ), Glu-406, and Arg-463. Active-site residues include His-508 and Glu-510.

It belongs to the CTP synthase family. Homotetramer.

It carries out the reaction UTP + L-glutamine + ATP + H2O = CTP + L-glutamate + ADP + phosphate + 2 H(+). The enzyme catalyses L-glutamine + H2O = L-glutamate + NH4(+). The catalysed reaction is UTP + NH4(+) + ATP = CTP + ADP + phosphate + 2 H(+). It participates in pyrimidine metabolism; CTP biosynthesis via de novo pathway; CTP from UDP: step 2/2. Its activity is regulated as follows. Allosterically activated by GTP, when glutamine is the substrate; GTP has no effect on the reaction when ammonia is the substrate. The allosteric effector GTP functions by stabilizing the protein conformation that binds the tetrahedral intermediate(s) formed during glutamine hydrolysis. Inhibited by the product CTP, via allosteric rather than competitive inhibition. In terms of biological role, catalyzes the ATP-dependent amination of UTP to CTP with either L-glutamine or ammonia as the source of nitrogen. Regulates intracellular CTP levels through interactions with the four ribonucleotide triphosphates. This chain is CTP synthase, found in Clostridium acetobutylicum (strain ATCC 824 / DSM 792 / JCM 1419 / IAM 19013 / LMG 5710 / NBRC 13948 / NRRL B-527 / VKM B-1787 / 2291 / W).